The sequence spans 155 residues: Ribosomal RNA large subunit methyltransferase H (155 aa).

S-adenosyl-L-methionine contacts are provided by residues Leu73, Gly104, and 123–128 (LSALTL).

It belongs to the RNA methyltransferase RlmH family. Homodimer.

The protein resides in the cytoplasm. It carries out the reaction pseudouridine(1915) in 23S rRNA + S-adenosyl-L-methionine = N(3)-methylpseudouridine(1915) in 23S rRNA + S-adenosyl-L-homocysteine + H(+). Specifically methylates the pseudouridine at position 1915 (m3Psi1915) in 23S rRNA. The polypeptide is Ribosomal RNA large subunit methyltransferase H (Saccharophagus degradans (strain 2-40 / ATCC 43961 / DSM 17024)).